Consider the following 655-residue polypeptide: Ankyrin repeat and SAM domain-containing protein 3 (655 aa).

Residues Met1–Ser421 form an interaction with NEK7 region. Phosphoserine occurs at positions 2 and 5. 6 ANK repeats span residues Asp34–Lys64, Gly68–Val97, Glu101–Met130, His134–Val163, Tyr168–Thr197, and Ser201–Leu220. Asn96 carries the 3-hydroxyasparagine modification. Residues Ser201, Ser225, Ser243, Ser244, and Ser245 each carry the phosphoserine modification. A disordered region spans residues Tyr314–Pro426. Phosphothreonine is present on Thr318. Ser319, Ser366, Ser369, and Ser373 each carry phosphoserine. Positions Lys378–His395 are enriched in basic residues. One can recognise an SAM domain in the interval Ser424–Ser487. Residues Ala500–Ala575 adopt a coiled-coil conformation. Ser540 carries the post-translational modification Phosphoserine.

Homooligomer. Interacts (via SAM domain) with ANKS6 (via SAM domain). Interacts with BICC1. Interacts with NPHP1. Interacts with NEK8. Interacts with HIF1AN. Interacts with NEK7; this interaction alters the subcellular distribution of NEK7 by preventing its nuclear translocation. Hydroxylated at Asn-96, most probably by HIF1AN. Post-translationally, phosphorylations at Ser-5, Ser-225, Thr-318, Ser-319, Ser-366 and Ser-369 occur in a NEK7-dependent manner. In terms of processing, polyubiquitinated. In terms of tissue distribution, kidney (at protein level).

It localises to the cell projection. The protein localises to the cilium. Its subcellular location is the cytoplasm. Functionally, may be involved in vasopressin signaling in the kidney. This is Ankyrin repeat and SAM domain-containing protein 3 (Anks3) from Mus musculus (Mouse).